The chain runs to 895 residues: Eukaryotic translation initiation factor 3 subunit C (895 aa).

Residues methionine 1–lysine 108 are disordered. Composition is skewed to acidic residues over residues serine 11–aspartate 31 and aspartate 52–asparagine 75. Residues phenylalanine 638–leucine 812 form the PCI domain. The span at aspartate 838 to glycine 860 shows a compositional bias: basic and acidic residues. The disordered stretch occupies residues aspartate 838–valine 895. Over residues arginine 884–valine 895 the composition is skewed to low complexity.

Belongs to the eIF-3 subunit C family. In terms of assembly, component of the eukaryotic translation initiation factor 3 (eIF-3) complex.

It is found in the cytoplasm. Its function is as follows. Component of the eukaryotic translation initiation factor 3 (eIF-3) complex, which is involved in protein synthesis of a specialized repertoire of mRNAs and, together with other initiation factors, stimulates binding of mRNA and methionyl-tRNAi to the 40S ribosome. The eIF-3 complex specifically targets and initiates translation of a subset of mRNAs involved in cell proliferation. In Mycosarcoma maydis (Corn smut fungus), this protein is Eukaryotic translation initiation factor 3 subunit C.